We begin with the raw amino-acid sequence, 320 residues long: Putative GDP-polyphosphate phosphotransferase PKK2A (320 aa).

3 disordered regions span residues 1–21, 246–267, and 281–320; these read MRKKKDGQNLPDFRKNPPKLD, RPLPEIPHRPDSESDYVRPPRD, and EERIKKEEKAKKAKKPAKAAGKNSDKQKSSGGKGKKKSKK. The segment covering 12–21 has biased composition (basic and acidic residues); sequence DFRKNPPKLD. Basic and acidic residues predominate over residues 281 to 290; that stretch reads EERIKKEEKA.

Belongs to the polyphosphate kinase 2 (PPK2) family. Class I subfamily.

The catalysed reaction is [phosphate](n) + GTP = [phosphate](n+1) + GDP. The sequence is that of Putative GDP-polyphosphate phosphotransferase PKK2A from Corynebacterium glutamicum (strain ATCC 13032 / DSM 20300 / JCM 1318 / BCRC 11384 / CCUG 27702 / LMG 3730 / NBRC 12168 / NCIMB 10025 / NRRL B-2784 / 534).